A 443-amino-acid polypeptide reads, in one-letter code: Major royal jelly protein 7 (443 aa).

The first 17 residues, 1 to 17, serve as a signal peptide directing secretion; sequence MTRWLFMVACLGIACQG. N-linked (GlcNAc...) asparagine glycosylation is found at N145, N161, N178, and N321.

This sequence belongs to the major royal jelly protein family. Found in and secreted from the hypopharyngeal glands of the worker honey bee (at protein level); expression peaks at 12 days post eclosion. Expressed in the brains of adult worker bees peaking at 12 days post eclosion (at protein level). Expressed in the spermatheca of adult queen bees (at protein level); Expression levels are higher in mated queens than in virgin queens.

It is found in the secreted. In terms of biological role, component of royal jelly, a substance produced in the hypopharyngeal gland containing proteins, free amino acids, fatty acids, sugars and other nutrients, which is fed to developing larvae by worker nurse bees. All larvae are fed some royal jelly (also known as worker jelly) early in their development but it forms the principal source of nutrition for larvae destined to become queen bees. Produced in the spermatheca of adult queen bees, along with other major royal jelly proteins, where it may act as a nutrient supply for sperm stored by mated queens, or be involved in energy metabolism. In Apis mellifera (Honeybee), this protein is Major royal jelly protein 7.